The following is a 134-amino-acid chain: Shikimate kinase (134 aa).

The protein belongs to the shikimate kinase family.

It is found in the cytoplasm. The enzyme catalyses shikimate + ATP = 3-phosphoshikimate + ADP + H(+). It functions in the pathway metabolic intermediate biosynthesis; chorismate biosynthesis; chorismate from D-erythrose 4-phosphate and phosphoenolpyruvate: step 5/7. This chain is Shikimate kinase (aroK), found in Neisseria gonorrhoeae.